The chain runs to 165 residues: Small ribosomal subunit protein uS5 (165 aa).

The S5 DRBM domain maps to 10–73; that stretch reads QIEKLISLNR…TSARKNLRFV (64 aa).

This sequence belongs to the universal ribosomal protein uS5 family. As to quaternary structure, part of the 30S ribosomal subunit. Contacts proteins S4 and S8.

With S4 and S12 plays an important role in translational accuracy. Functionally, located at the back of the 30S subunit body where it stabilizes the conformation of the head with respect to the body. This Borreliella afzelii (strain PKo) (Borrelia afzelii) protein is Small ribosomal subunit protein uS5.